Reading from the N-terminus, the 513-residue chain is GMP synthase [glutamine-hydrolyzing] (513 aa).

The Glutamine amidotransferase type-1 domain occupies Ser-3 to Asp-200. Cys-80 acts as the Nucleophile in catalysis. Catalysis depends on residues His-174 and Glu-176. The GMPS ATP-PPase domain maps to Trp-201–Arg-388. An ATP-binding site is contributed by Ser-228 to Thr-234.

In terms of assembly, homodimer.

The catalysed reaction is XMP + L-glutamine + ATP + H2O = GMP + L-glutamate + AMP + diphosphate + 2 H(+). It participates in purine metabolism; GMP biosynthesis; GMP from XMP (L-Gln route): step 1/1. In terms of biological role, catalyzes the synthesis of GMP from XMP. This chain is GMP synthase [glutamine-hydrolyzing], found in Chlorobium luteolum (strain DSM 273 / BCRC 81028 / 2530) (Pelodictyon luteolum).